Consider the following 1079-residue polypeptide: MLRAVLQANKNGVPLHKLQAEYKSVTGEPIPFKDMGFPALDAYLKSIPSVVRIEVSRVGEVTCYAVACKETARIAELVAHQRSSKKKGGHQVNCQMRLKSTAPVSHFGKPKITLRQPGFTPPQEMMIRKPVPTPPWGKGNYFGPRTFEYSPQPIPQLFGVAPMQRHLPNMNRPERKVTLPPRFQREVKSPLLPTPITDSNANHTQSYKRVVIGSGQSDLPVIQNNLKELLNKHSNGLWLSKLPQLYKETYKQDLGGEVLKQVPSWTHICTVQKLVSSGHTEIVIYATTRKQQPSTKNIQNRSNDQAKPNVPVVLSTPSSPPPLQISGSIPKDELKEKISTILTKYSNGLWYHALPKVFEDMFKQKLPIEAFNLDSLTDICTVDLISEEPFKAILYGKSAERAVQNSNPSVNNNIPQKLHDREPPLCSEEPDMTMAPPPLVIPSEASPSVLVVELNSTNDVVIRYIGRDYSAAQERMEDELKDFCSKSSTAQVRPLRVGQLVAAKAEEDAWLRAQISAIEDKKIKVCYVDYGFSETVDITKVCKLGKPFYTLPFQATKCRLAGLEAFCDDSVIIKALEAKACGKILAVEILHKSEKPLVVLYDTSGDDDININAACLKELYDRSLSLQLKANLSFSNVTVTNVCSDGTLFCQVPSKGLAKLYETLQKVDGEFQFQQVTSHLYVSLPFCGKICLYHYKGKWARVEITNVHSSRALDVHFLDSGTIASVKVSELKEIPPPLLRDLISIPPQALKCCLADLPLNIGMWTPDAVLWLRNTVLNCPECSIKVVKIDEAMNMVHIYLFTSNNFPDLERSINRRITNEELLKQKQKDVFLNMSVSSLEKGRGGGGAPASQLFPSGPCISPTSVAKKPDMQQSSPVPSFNMPPALPLPRPGEHMDVFVSVACHPGHFVCQPWQELHKLELVMDEMRLHYSTTEEKPIALEKNKLYAAKIENNWYRVLVKGILTNGLVSVYELDHGRHELVSCRKVQPLIEKFMHLPFQAITSQLAGINCEQWSEETSIVFRNHVEKKPLVALVQTIHESTHPWERRVVAYIVDTTLPDTDIWIHELMTEYLAQFSKPE.

Positions 1–69 (MLRAVLQANK…EVTCYAVACK (69 aa)) constitute an HTH OST-type 1 domain. Residues 109–132 (KPKITLRQPGFTPPQEMMIRKPVP) are disordered. HTH OST-type domains lie at 218 to 288 (DLPV…YATT) and 330 to 398 (PKDE…YGKS). 2 consecutive Tudor domains span residues 494-551 (PLRV…FYTL) and 684-741 (LPFC…LLRD).

The protein belongs to the TDRD7 family.

It localises to the cytoplasm. Component of specific cytoplasmic RNA granules involved in post-transcriptional regulation of specific genes: probably acts by binding to specific mRNAs and regulating their translation. Probably required during spermatogenesis. In Xenopus laevis (African clawed frog), this protein is Tudor domain-containing protein 7 (tdrd7).